Reading from the N-terminus, the 691-residue chain is Elongation factor G (691 aa).

One can recognise a tr-type G domain in the interval 8 to 282 (HMVRNIGIAA…AVVDYLPAPD (275 aa)). Residues 17–24 (AHIDAGKT), 81–85 (DTPGH), and 135–138 (NKMD) contribute to the GTP site.

It belongs to the TRAFAC class translation factor GTPase superfamily. Classic translation factor GTPase family. EF-G/EF-2 subfamily.

It is found in the cytoplasm. In terms of biological role, catalyzes the GTP-dependent ribosomal translocation step during translation elongation. During this step, the ribosome changes from the pre-translocational (PRE) to the post-translocational (POST) state as the newly formed A-site-bound peptidyl-tRNA and P-site-bound deacylated tRNA move to the P and E sites, respectively. Catalyzes the coordinated movement of the two tRNA molecules, the mRNA and conformational changes in the ribosome. This chain is Elongation factor G, found in Campylobacter hominis (strain ATCC BAA-381 / DSM 21671 / CCUG 45161 / LMG 19568 / NCTC 13146 / CH001A).